The chain runs to 406 residues: Exodeoxyribonuclease 7 large subunit (406 aa).

This sequence belongs to the XseA family. As to quaternary structure, heterooligomer composed of large and small subunits.

Its subcellular location is the cytoplasm. It carries out the reaction Exonucleolytic cleavage in either 5'- to 3'- or 3'- to 5'-direction to yield nucleoside 5'-phosphates.. Its function is as follows. Bidirectionally degrades single-stranded DNA into large acid-insoluble oligonucleotides, which are then degraded further into small acid-soluble oligonucleotides. The chain is Exodeoxyribonuclease 7 large subunit from Desulforudis audaxviator (strain MP104C).